We begin with the raw amino-acid sequence, 32 residues long: Lectin (32 aa).

The protein belongs to the leguminous lectin family. Homotetramer.

Functionally, metalloglycoprotein, containing Ca, Mg, Mn, and Zn and the carbohydrates galactose, glucosamine, mannose, and fucose. It agglutinates erythrocytes of blood group A1. The chain is Lectin from Macrotyloma axillare (Perennial horse gram).